The following is an 872-amino-acid chain: Alanine--tRNA ligase (872 aa).

Positions 566, 570, 668, and 672 each coordinate Zn(2+).

It belongs to the class-II aminoacyl-tRNA synthetase family. It depends on Zn(2+) as a cofactor.

Its subcellular location is the cytoplasm. The enzyme catalyses tRNA(Ala) + L-alanine + ATP = L-alanyl-tRNA(Ala) + AMP + diphosphate. Functionally, catalyzes the attachment of alanine to tRNA(Ala) in a two-step reaction: alanine is first activated by ATP to form Ala-AMP and then transferred to the acceptor end of tRNA(Ala). Also edits incorrectly charged Ser-tRNA(Ala) and Gly-tRNA(Ala) via its editing domain. This is Alanine--tRNA ligase from Lactococcus lactis subsp. cremoris (strain MG1363).